Reading from the N-terminus, the 195-residue chain is MITIGILNLQGAVSEHYDITKKAIENMGIEAEAISVRYADEVANCDGVIISGGESTVIGKIIKERGIDKVIKDNRIPVFGTCAGMVLLGKKTDFDQPLLGIMDISVKRNAFGRQVDSFESPISILGEDYLGVFIRAPSLDDYDKTKEDIKVLSKLDDEIIAIQQGHNIAIAFHPELTDDTRIHEYFIEEVLNCVE.

53 to 55 (GES) is a binding site for L-glutamine. Cysteine 82 serves as the catalytic Nucleophile. L-glutamine contacts are provided by residues arginine 108 and 134–135 (IR). Residues histidine 173 and glutamate 175 each act as charge relay system in the active site.

It belongs to the glutaminase PdxT/SNO family. In terms of assembly, in the presence of PdxS, forms a dodecamer of heterodimers. Only shows activity in the heterodimer.

It carries out the reaction aldehydo-D-ribose 5-phosphate + D-glyceraldehyde 3-phosphate + L-glutamine = pyridoxal 5'-phosphate + L-glutamate + phosphate + 3 H2O + H(+). It catalyses the reaction L-glutamine + H2O = L-glutamate + NH4(+). Its pathway is cofactor biosynthesis; pyridoxal 5'-phosphate biosynthesis. Catalyzes the hydrolysis of glutamine to glutamate and ammonia as part of the biosynthesis of pyridoxal 5'-phosphate. The resulting ammonia molecule is channeled to the active site of PdxS. This Methanobrevibacter smithii (strain ATCC 35061 / DSM 861 / OCM 144 / PS) protein is Pyridoxal 5'-phosphate synthase subunit PdxT.